The following is a 761-amino-acid chain: MKTIEPEVNLALAAEHGLNAEEYQKIQEVLGRTPTFTELGIFSVMWSEHCSYKNSIAVLKTLPREGEALLTGAGEENAGLVDIGDNLAVAFKIESHNHPSAVEPYQGAATGVGGIHRDIFTMGARPVASLNSLRFGSPKDPRVRYLVDGVVRGIGDYGNSFGVPTVGGEIYFEDCYTGNPLVNAMSVGIVEHHKTVSATAEGEGNPVLIVGSSTGRDGIHGATFASEDLSEASEDKRPSVQVGDPFAEKLLLEATLEAIATGYVAGLQDMGAAGITSSTSEMSARGIEKNGNGGITIDLDLVPAREAGMSAYEIMLSESQERMLIVAEKGHEDDIIAVYRKWDVQAVVVGTVTSDNHVKVLHHGELVADIPAESLVLGGGAPVYIREAVGKKPDTAPAALLPDAGLDLRALALELLKRPNIASKRWVYRQYDSMVQTNTVTPVGHTDAAVIRIRGTKKGLAMKTDCNSRYVYLNPLAGGRIAVAECARNIACSGARPLAITNCLNFGNPYKPEVYFQFKTSVQGMGDACRAFNTPVTGGNVSFYNESTHGGGRAAIYPTPTIGMIGLLDDIDNLVGSAFTTAGDAIILFGDPLLKLEGSEFQVMQYGTPGTDAPDIDLQHEKNLQDLLVTLAEQKLLHSAHDVSDGGLFVTLAEKAIMDESRQLGFQVDLEDCGSGPYRVQEQLFSEAQGRVVGTIAPDAARAVIEEAIRHSVPVRVIGQVVPADASLAVDGHETLRFTTEELTAAYYDALENALHLNELL.

The active site involves His-49. Residues Tyr-52 and Lys-92 each contribute to the ATP site. Residue Glu-94 coordinates Mg(2+). Residues 95 to 98 and Arg-117 contribute to the substrate site; that span reads SHNH. The active-site Proton acceptor is His-96. Asp-118 is a binding site for Mg(2+). Substrate is bound at residue Gln-241. Residue Asp-269 participates in Mg(2+) binding. 318 to 320 contributes to the substrate binding site; it reads ESQ. ATP contacts are provided by Asn-502 and Gly-539. Mg(2+) is bound at residue Asn-540. Ser-542 serves as a coordination point for substrate.

It belongs to the FGAMS family. As to quaternary structure, monomer. Part of the FGAM synthase complex composed of 1 PurL, 1 PurQ and 2 PurS subunits.

It is found in the cytoplasm. It carries out the reaction N(2)-formyl-N(1)-(5-phospho-beta-D-ribosyl)glycinamide + L-glutamine + ATP + H2O = 2-formamido-N(1)-(5-O-phospho-beta-D-ribosyl)acetamidine + L-glutamate + ADP + phosphate + H(+). It participates in purine metabolism; IMP biosynthesis via de novo pathway; 5-amino-1-(5-phospho-D-ribosyl)imidazole from N(2)-formyl-N(1)-(5-phospho-D-ribosyl)glycinamide: step 1/2. Part of the phosphoribosylformylglycinamidine synthase complex involved in the purines biosynthetic pathway. Catalyzes the ATP-dependent conversion of formylglycinamide ribonucleotide (FGAR) and glutamine to yield formylglycinamidine ribonucleotide (FGAM) and glutamate. The FGAM synthase complex is composed of three subunits. PurQ produces an ammonia molecule by converting glutamine to glutamate. PurL transfers the ammonia molecule to FGAR to form FGAM in an ATP-dependent manner. PurS interacts with PurQ and PurL and is thought to assist in the transfer of the ammonia molecule from PurQ to PurL. In Chlorobium luteolum (strain DSM 273 / BCRC 81028 / 2530) (Pelodictyon luteolum), this protein is Phosphoribosylformylglycinamidine synthase subunit PurL.